The following is a 113-amino-acid chain: uncharacterized protein (113 aa).

An N-terminal signal peptide occupies residues 1–38 (MVKIERKATDSAYHEFTKILTSSAQLMAFLNQSDFVKA).

This is an uncharacterized protein from Haemophilus influenzae (strain ATCC 51907 / DSM 11121 / KW20 / Rd).